The sequence spans 449 residues: Gamma conglutin 1 (449 aa).

An N-terminal signal peptide occupies residues 1-33 (MARNMAHILHILVISLSYSFLFVSSSSQDSQSL). Residues 60–429 (HWANIHKRTP…DLERSRVGFN (370 aa)) enclose the Peptidase A1 domain. Cystine bridges form between Cys-88/Cys-178, Cys-102/Cys-115, Cys-107/Cys-133, Cys-118/Cys-128, and Cys-350/Cys-391. Asn-130 carries N-linked (GlcNAc...) asparagine glycosylation.

Belongs to the peptidase A1 family. As to quaternary structure, two-subunit monomeric unit made of alpha and beta subunits coupled by disulfide bonds (at pH 4.5 and under non-reducing conditions). Can also form oligomers including dimer, tetramer and cyclic hexamer (trimer of dimers) (at pH &gt; 5.5). Component of globulins complexes which accumulate in seeds. Interacts with flavonoids (e.g. apigenin glucosides) present in globulins complexes. Forms a static complex with vitexin. Post-translationally, undergoes very complex post-translational maturation; the proteolytic processing leading to the formation of two alpha and beta subunits is incomplete, leaving a certain amount of the protein in an uncut form. In terms of processing, glycosylated on alpha chain. In terms of tissue distribution, expressed in developing cotyledons and in the embryonic axis of germinating seeds. Accumulates in seeds, especially in the protein bodies of developing cotyledonary cells (at protein level). Also detected, at low levels, in plumules and radicles.

It is found in the secreted. Its subcellular location is the extracellular space. Functionally, sulfur-rich seed storage protein that remains undegraded at germination. The polypeptide is Gamma conglutin 1 (Lupinus angustifolius (Narrow-leaved blue lupine)).